A 247-amino-acid chain; its full sequence is GTP cyclohydrolase 1 type 2 homolog (247 aa).

A divalent metal cation-binding residues include His-63, His-64, Asp-101, His-215, and Glu-219.

This sequence belongs to the GTP cyclohydrolase I type 2/NIF3 family. In terms of assembly, homohexamer.

The protein is GTP cyclohydrolase 1 type 2 homolog of Yersinia pestis.